A 151-amino-acid chain; its full sequence is Deoxyuridine 5'-triphosphate nucleotidohydrolase (151 aa).

Substrate is bound by residues 70-72 (RSG), asparagine 83, 87-89 (LID), and methionine 97.

This sequence belongs to the dUTPase family. Requires Mg(2+) as cofactor.

The enzyme catalyses dUTP + H2O = dUMP + diphosphate + H(+). It functions in the pathway pyrimidine metabolism; dUMP biosynthesis; dUMP from dCTP (dUTP route): step 2/2. This enzyme is involved in nucleotide metabolism: it produces dUMP, the immediate precursor of thymidine nucleotides and it decreases the intracellular concentration of dUTP so that uracil cannot be incorporated into DNA. The polypeptide is Deoxyuridine 5'-triphosphate nucleotidohydrolase (Tolumonas auensis (strain DSM 9187 / NBRC 110442 / TA 4)).